A 419-amino-acid chain; its full sequence is Gamma-glutamyl phosphate reductase (419 aa).

The protein belongs to the gamma-glutamyl phosphate reductase family.

The protein localises to the cytoplasm. It carries out the reaction L-glutamate 5-semialdehyde + phosphate + NADP(+) = L-glutamyl 5-phosphate + NADPH + H(+). It functions in the pathway amino-acid biosynthesis; L-proline biosynthesis; L-glutamate 5-semialdehyde from L-glutamate: step 2/2. In terms of biological role, catalyzes the NADPH-dependent reduction of L-glutamate 5-phosphate into L-glutamate 5-semialdehyde and phosphate. The product spontaneously undergoes cyclization to form 1-pyrroline-5-carboxylate. The polypeptide is Gamma-glutamyl phosphate reductase (Nitratidesulfovibrio vulgaris (strain DP4) (Desulfovibrio vulgaris)).